Reading from the N-terminus, the 684-residue chain is Cyclic nucleotide-gated channel alpha-1 (684 aa).

Topologically, residues Met1 to Leu161 are cytoplasmic. The segment at Ala34 to Lys145 is disordered. The span at Ser39–Asp54 shows a compositional bias: acidic residues. Basic and acidic residues predominate over residues Ser105–Lys145. Residues Phe162–Glu183 form a helical membrane-spanning segment. Residues Leu184–Leu193 are Extracellular-facing. Residues Ile194–Gly214 form a helical membrane-spanning segment. Residues Tyr215 to Lys239 lie on the Cytoplasmic side of the membrane. A helical transmembrane segment spans residues Leu240–Asn258. At Tyr259–Arg263 the chain is on the extracellular side. Residues Leu264 to Thr282 traverse the membrane as a helical segment. The Cytoplasmic portion of the chain corresponds to Arg283–Ile289. The interval Pro287–Met395 is ion conduction pathway. Residues Phe290–Ile313 form a helical membrane-spanning segment. The Extracellular segment spans residues Ser314–Arg336. An N-linked (GlcNAc...) asparagine glycan is attached at Asn321. The next 2 helical transmembrane spans lie at Leu337–Val371 and Val372–Asn396. Positions Thr354–Glu357 are selectivity filter. The C-linker stretch occupies residues Ala397–Ala473. The Cytoplasmic portion of the chain corresponds to Ala397–Asp684. Positions Ala477–Lys597 are cyclic nucleotide-binding domain. 4 residues coordinate 3',5'-cyclic GMP: Gly537, Ser540, Arg553, and Thr554. Residues Arg553 and Thr554 each contribute to the 3',5'-cyclic AMP site. Residues Leu615 to Leu669 adopt a coiled-coil conformation.

The protein belongs to the cyclic nucleotide-gated cation channel (TC 1.A.1.5) family. CNGA1 subfamily. In terms of assembly, forms heterotetrameric channels composed of CNGA1 and CNGB1 subunits with 3:1 stoichiometry. May also form cyclic nucleotide-activated homotetrameric channels, that are efficiently activated by saturating cGMP, but poorly activated by saturating cAMP compared to the heterotetramer with CNGB1. The channel binds Ca(2+)-bound CALM1 via CaM1 and CaM2 regions of the CNGB1 subunit; this interaction modulates the affinity of the channel for cNMPs in response to intracellular Ca(2+) levels. Rod cells in the retina and inner medulla of kidney.

The protein localises to the cell membrane. The catalysed reaction is Ca(2+)(in) = Ca(2+)(out). It carries out the reaction Na(+)(in) = Na(+)(out). It catalyses the reaction K(+)(in) = K(+)(out). The enzyme catalyses NH4(+)(in) = NH4(+)(out). The catalysed reaction is Rb(+)(in) = Rb(+)(out). It carries out the reaction Li(+)(in) = Li(+)(out). It catalyses the reaction Cs(+)(in) = Cs(+)(out). Pore-forming subunit of the rod cyclic nucleotide-gated channel. Mediates rod photoresponses at dim light converting transient changes in intracellular cGMP levels into electrical signals. In the dark, cGMP levels are high and keep the channel open enabling a steady inward current carried by Na(+) and Ca(2+) ions that leads to membrane depolarization and neurotransmitter release from synaptic terminals. Upon photon absorption cGMP levels decline leading to channel closure and membrane hyperpolarization that ultimately slows neurotransmitter release and signals the presence of light, the end point of the phototransduction cascade. Conducts cGMP- and cAMP-gated ion currents, with permeability for monovalent and divalent cations. The selectivity for Ca(2+) over Na(+) increases with cGMP concentrations, whereas the selectivity among monovalent ions is independent of the cGMP levels. The protein is Cyclic nucleotide-gated channel alpha-1 (Cnga1) of Mus musculus (Mouse).